A 544-amino-acid chain; its full sequence is CTP synthase (544 aa).

An amidoligase domain region spans residues 1-266 (MSTKFIFVTG…DYFVCRRFHL (266 aa)). Ser14 provides a ligand contact to CTP. Ser14 is a binding site for UTP. Residues 15–20 (SLGKGI) and Asp72 each bind ATP. Mg(2+) contacts are provided by Asp72 and Glu140. Residues 147-149 (DIE), 187-192 (KTKPTQ), and Lys223 contribute to the CTP site. UTP contacts are provided by residues 187-192 (KTKPTQ) and Lys223. Residues 291-542 (TIGMVGKYIE…VAAAHIHQKA (252 aa)) form the Glutamine amidotransferase type-1 domain. L-glutamine is bound at residue Gly352. The active-site Nucleophile; for glutamine hydrolysis is Cys379. Residues 380–383 (LGMQ), Glu403, and Arg470 each bind L-glutamine. Active-site residues include His515 and Glu517.

Belongs to the CTP synthase family. Homotetramer.

The catalysed reaction is UTP + L-glutamine + ATP + H2O = CTP + L-glutamate + ADP + phosphate + 2 H(+). It catalyses the reaction L-glutamine + H2O = L-glutamate + NH4(+). It carries out the reaction UTP + NH4(+) + ATP = CTP + ADP + phosphate + 2 H(+). The protein operates within pyrimidine metabolism; CTP biosynthesis via de novo pathway; CTP from UDP: step 2/2. Its activity is regulated as follows. Allosterically activated by GTP, when glutamine is the substrate; GTP has no effect on the reaction when ammonia is the substrate. The allosteric effector GTP functions by stabilizing the protein conformation that binds the tetrahedral intermediate(s) formed during glutamine hydrolysis. Inhibited by the product CTP, via allosteric rather than competitive inhibition. Catalyzes the ATP-dependent amination of UTP to CTP with either L-glutamine or ammonia as the source of nitrogen. Regulates intracellular CTP levels through interactions with the four ribonucleotide triphosphates. The sequence is that of CTP synthase from Pseudoalteromonas translucida (strain TAC 125).